Reading from the N-terminus, the 98-residue chain is Protein FAM24A (98 aa).

An N-terminal signal peptide occupies residues 1–29 (MFDLRTKVMIGIASTLLIAAIMLITLVFC).

The protein belongs to the FAM24 family.

The protein localises to the secreted. The polypeptide is Protein FAM24A (Fam24a) (Mus musculus (Mouse)).